Consider the following 601-residue polypeptide: Glutathione-regulated potassium-efflux system protein KefB (601 aa).

The next 13 membrane-spanning stretches (helical) occupy residues 4 to 24 (SDLL…VPLA), 29 to 49 (IGAV…GLGF), 55 to 75 (EILH…GLEL), 87 to 107 (IFGV…GLLM), 115 to 135 (AAVV…LQLM), 152 to 172 (VLLF…LLAG), 177 to 197 (HVNW…LIGG), 207 to 227 (FIAS…LVLG), 230 to 250 (LFME…GVLL), 268 to 288 (GLLL…GVLY), 291 to 311 (LLWV…VLYL), 326 to 346 (FAGV…LPAS), and 356 to 376 (ALLL…MKGI). An RCK N-terminal domain is found at 400–519 (KPQVIIVGFG…AGVTQFSRET (120 aa)).

This sequence belongs to the monovalent cation:proton antiporter 2 (CPA2) transporter (TC 2.A.37) family. KefB subfamily. Interacts with the regulatory subunit KefG.

The protein localises to the cell inner membrane. Its function is as follows. Pore-forming subunit of a potassium efflux system that confers protection against electrophiles. Catalyzes K(+)/H(+) antiport. This Klebsiella pneumoniae subsp. pneumoniae (strain ATCC 700721 / MGH 78578) protein is Glutathione-regulated potassium-efflux system protein KefB.